Reading from the N-terminus, the 392-residue chain is Phosphoglycerate kinase (392 aa).

Substrate contacts are provided by residues 21 to 23 (DLN), Arg36, 59 to 62 (HRGR), Arg113, and Arg146. ATP contacts are provided by residues Lys197, Glu314, and 340–343 (GGDT).

It belongs to the phosphoglycerate kinase family. Monomer.

It localises to the cytoplasm. It catalyses the reaction (2R)-3-phosphoglycerate + ATP = (2R)-3-phospho-glyceroyl phosphate + ADP. The protein operates within carbohydrate degradation; glycolysis; pyruvate from D-glyceraldehyde 3-phosphate: step 2/5. The polypeptide is Phosphoglycerate kinase (Vesicomyosocius okutanii subsp. Calyptogena okutanii (strain HA)).